We begin with the raw amino-acid sequence, 154 residues long: Snaclec salmorin subunit A (154 aa).

The N-terminal stretch at M1–A23 is a signal peptide. Cystine bridges form between C27–C38, C55–C152, and C127–C144. The 120-residue stretch at N34–E153 folds into the C-type lectin domain. Ca(2+)-binding residues include S66, E68, and E72. E153 is a binding site for Ca(2+).

Belongs to the snaclec family. Heterodimer of subunits A and B; disulfide-linked. Expressed by the venom gland.

The protein localises to the secreted. Functionally, inhibits thrombin-induced fibrinogen clotting and factor Xa-induced prothrombin activation. Binds to thrombin and prothrombin exosites. The chain is Snaclec salmorin subunit A from Gloydius brevicauda (Korean slamosa snake).